The following is a 462-amino-acid chain: Transcript termination protein A18 (462 aa).

One can recognise a Helicase ATP-binding domain in the interval 99-255 (KCKEKRPLYT…NSIINFIKFS (157 aa)). 112–119 (LACGFGKT) contributes to the ATP binding site. Positions 205 to 208 (DEAH) match the DEAH box motif. The Helicase C-terminal domain maps to 308–459 (IVDKIIETFK…ATKLGFREVS (152 aa)).

This sequence belongs to the helicase family. Poxviruses subfamily. As to quaternary structure, interacts with G2. Might be part of a transcription complex composed at least of G2, A18, and H5.

The protein resides in the virion. DNA helicase which seems to act as a postreplicative transcription termination factor. Involved in ATP-dependent release of nascent RNA. Forms a stable complex with single-stranded DNA, and to a lesser extent RNA. This is Transcript termination protein A18 from Vertebrata (FPV).